The following is a 76-amino-acid chain: uncharacterized protein (76 aa).

The helical transmembrane segment at 18-38 (FISALFFFNAVCIVSDNLLII) threads the bilayer.

The protein resides in the cell membrane. This is an uncharacterized protein from Escherichia coli O6:H1 (strain CFT073 / ATCC 700928 / UPEC).